A 1027-amino-acid chain; its full sequence is Sodium/potassium-transporting ATPase subunit alpha-1 (1027 aa).

Positions methionine 1–aspartate 5 are excised as a propeptide. Positions methionine 1–tyrosine 10 are enriched in basic and acidic residues. The tract at residues methionine 1–lysine 39 is disordered. Topologically, residues glycine 6–proline 90 are cytoplasmic. Position 16 is a phosphoserine; by PKC (serine 16). Residues glutamate 29–lysine 39 show a composition bias toward basic and acidic residues. The interaction with phosphoinositide-3 kinase stretch occupies residues proline 85 to proline 87. The chain crosses the membrane as a helical span at residues glutamate 91 to alanine 111. At valine 112 to tyrosine 134 the chain is on the extracellular side. Residues leucine 135–alanine 155 form a helical membrane-spanning segment. Topologically, residues lysine 156–isoleucine 291 are cytoplasmic. Residues aspartate 217 to asparagine 238 form a disordered region. A helical transmembrane segment spans residues glutamate 292 to leucine 311. The Extracellular segment spans residues leucine 312–alanine 323. A helical membrane pass occupies residues valine 324 to alanine 341. Over threonine 342–leucine 776 the chain is Cytoplasmic. Aspartate 379 functions as the 4-aspartylphosphate intermediate in the catalytic mechanism. Position 490 (lysine 490) interacts with ATP. Mg(2+) contacts are provided by aspartate 721 and aspartate 725. Residues lysine 777–phenylalanine 796 form a helical membrane-spanning segment. The Extracellular segment spans residues phenylalanine 797 to leucine 806. The helical transmembrane segment at glycine 807–alanine 827 threads the bilayer. Residues tyrosine 828–lysine 847 are Cytoplasmic-facing. Residues leucine 848–phenylalanine 870 traverse the membrane as a helical segment. Residues phenylalanine 871–cysteine 922 lie on the Extracellular side of the membrane. A helical transmembrane segment spans residues histidine 923–lysine 942. Over threonine 943–asparagine 955 the chain is Cytoplasmic. The residue at position 947 (serine 947) is a Phosphoserine; by PKA. The chain crosses the membrane as a helical span at residues lysine 956 to tyrosine 974. The Extracellular segment spans residues cysteine 975–proline 989. The helical transmembrane segment at asparagine 990–lysine 1010 threads the bilayer. Topologically, residues leucine 1011–tyrosine 1027 are cytoplasmic.

It belongs to the cation transport ATPase (P-type) (TC 3.A.3) family. Type IIC subfamily. In terms of assembly, the sodium/potassium-transporting ATPase is composed of a catalytic alpha subunit, an auxiliary non-catalytic beta subunit and an additional regulatory subunit.

The protein localises to the cell membrane. Its subcellular location is the sarcolemma. The enzyme catalyses K(+)(out) + Na(+)(in) + ATP + H2O = K(+)(in) + Na(+)(out) + ADP + phosphate + H(+). Its function is as follows. This is the catalytic component of the active enzyme, which catalyzes the hydrolysis of ATP coupled with the exchange of sodium and potassium ions across the plasma membrane. This action creates the electrochemical gradient of sodium and potassium ions, providing the energy for active transport of various nutrients. The protein is Sodium/potassium-transporting ATPase subunit alpha-1 (atp1a1) of Catostomus commersonii (White sucker).